The following is a 1128-amino-acid chain: Membrane-associated guanylate kinase, WW and PDZ domain-containing protein 3 (1128 aa).

Residues 22–108 (WGGPAGPDPE…PVRLKTVRPG (87 aa)) enclose the PDZ 1 domain. The region spanning 116 to 290 (RHYLSLQFQK…SMDFRNYMSR (175 aa)) is the Guanylate kinase-like domain. 123–130 (FQKGSIDH) is a binding site for ATP. A disordered region spans residues 184–276 (TYDGNFYGTP…DWMKPVPSYN (93 aa)). A compositionally biased stretch (pro residues) spans 193-204 (PKPPAEPSPFQP). Residues 238–247 (LPEDEEEEEK) are compositionally biased toward acidic residues. The span at 257–267 (ENKEKHSDSSD) shows a compositional bias: basic and acidic residues. WW domains follow at residues 295–328 (EPLP…DPRL) and 341–374 (GELP…NPVL). 2 consecutive PDZ domains span residues 412-494 (RTSL…TLCR) and 581-657 (TIPL…LILR). Residues 658-688 (GGPPSPTKTGKMKDKQESSGSLEALSDAIPQ) are disordered. 2 consecutive PDZ domains span residues 728 to 810 (DVFL…TVRR) and 852 to 939 (DVCL…VAEE). 2 disordered regions span residues 939 to 985 (EEHR…GKEV) and 999 to 1018 (LAQP…SQAQ). Polar residues-rich tracts occupy residues 946-956 (SGTNSAKQSPA) and 965-974 (AQSSASSTDR). Residues 1024 to 1106 (PVELERGPRG…KVLLLLRPGT (83 aa)) enclose the PDZ 6 domain.

It belongs to the MAGUK family.

The protein localises to the cell membrane. It localises to the cell junction. Its subcellular location is the tight junction. Functionally, acts as a scaffolding protein at cell-cell junctions, thereby regulating various cellular and signaling processes. The polypeptide is Membrane-associated guanylate kinase, WW and PDZ domain-containing protein 3 (MAGI3) (Gallus gallus (Chicken)).